The primary structure comprises 523 residues: Chitinase Chi52 (523 aa).

The first 30 residues, Met1–Ala30, serve as a signal peptide directing secretion. Residues Gly80–Ser101 form a disordered region. The region spanning Val95 to Gly180 is the Fibronectin type-III domain. In terms of domain architecture, GH18 spans Lys190–Leu513. Residue Glu302 is the Proton donor of the active site.

Belongs to the glycosyl hydrolase 18 family. Chitinase class II subfamily.

It catalyses the reaction Random endo-hydrolysis of N-acetyl-beta-D-glucosaminide (1-&gt;4)-beta-linkages in chitin and chitodextrins.. With respect to regulation, activity is inhibited by Cu(2+) and Co(2+), and almost completely inhibited by SDS. In terms of biological role, acidic chitinase that displays a broad substrate specificity, showing the highest specific activity toward colloidal chitin, followed by ethylene glycol chitin and ball milled chitin, but exhibits no activity toward powdery chitin and chitosan. Hydrolyzes colloidal chitin and chitooligosaccharides with degree of polymerization 2-5 to release mainly N-acetyl chitobiose. Displays inhibition effects on the growth of some phytopathogenic fungi, including Alternaria alstroemeriae, Botrytis cinerea, Rhizoctonia solani, Sclerotinia sclerotiorum and Valsa mali. This is Chitinase Chi52 from Paenibacillus xylanexedens.